The following is a 190-amino-acid chain: 6,7-dimethyl-8-ribityllumazine synthase (190 aa).

Residues W31, 65–67 (SFE), and 89–91 (CVI) each bind 5-amino-6-(D-ribitylamino)uracil. 94 to 95 (ET) contacts (2S)-2-hydroxy-3-oxobutyl phosphate. The active-site Proton donor is the H97. Residue F122 participates in 5-amino-6-(D-ribitylamino)uracil binding. Residue R136 participates in (2S)-2-hydroxy-3-oxobutyl phosphate binding.

The protein belongs to the DMRL synthase family.

The enzyme catalyses (2S)-2-hydroxy-3-oxobutyl phosphate + 5-amino-6-(D-ribitylamino)uracil = 6,7-dimethyl-8-(1-D-ribityl)lumazine + phosphate + 2 H2O + H(+). Its pathway is cofactor biosynthesis; riboflavin biosynthesis; riboflavin from 2-hydroxy-3-oxobutyl phosphate and 5-amino-6-(D-ribitylamino)uracil: step 1/2. In terms of biological role, catalyzes the formation of 6,7-dimethyl-8-ribityllumazine by condensation of 5-amino-6-(D-ribitylamino)uracil with 3,4-dihydroxy-2-butanone 4-phosphate. This is the penultimate step in the biosynthesis of riboflavin. The protein is 6,7-dimethyl-8-ribityllumazine synthase of Flavobacterium johnsoniae (strain ATCC 17061 / DSM 2064 / JCM 8514 / BCRC 14874 / CCUG 350202 / NBRC 14942 / NCIMB 11054 / UW101) (Cytophaga johnsonae).